Consider the following 763-residue polypeptide: Probable ubiquitin carboxyl-terminal hydrolase MINDY-4 (763 aa).

Residue serine 143 is modified to Phosphoserine. The interval 154–368 (SSKRSSHKSR…SQPASLRKNQ (215 aa)) is disordered. Residues 180 to 202 (EKTDKLPMSEPSLDTKRMGEKVR) are compositionally biased toward basic and acidic residues. A phosphoserine mark is found at serine 220 and serine 224. A compositionally biased stretch (polar residues) spans 252 to 261 (ELSTHTSTCP). The span at 267–278 (PASSTASTSRSP) shows a compositional bias: low complexity. Serine 296 bears the Phosphoserine mark. Basic and acidic residues predominate over residues 346–355 (TQERPERAFE). Positions 357–368 (QGSQPASLRKNQ) are enriched in polar residues. The Nucleophile role is filled by cysteine 463. Histidine 683 serves as the catalytic Proton acceptor.

The protein belongs to the MINDY deubiquitinase family. FAM188 subfamily.

The catalysed reaction is Thiol-dependent hydrolysis of ester, thioester, amide, peptide and isopeptide bonds formed by the C-terminal Gly of ubiquitin (a 76-residue protein attached to proteins as an intracellular targeting signal).. Functionally, probable hydrolase that can remove 'Lys-48'-linked conjugated ubiquitin from proteins. This chain is Probable ubiquitin carboxyl-terminal hydrolase MINDY-4 (MINDY4), found in Bos taurus (Bovine).